We begin with the raw amino-acid sequence, 376 residues long: Cysteine proteinase 2 (376 aa).

Residues 1–18 (MRLLVFLILLIFVNFSFA) form the signal peptide. Positions 19–122 (NVRPNGRRFS…EVLNVEDLQT (104 aa)) are cleaved as a propeptide — activation peptide. Disulfide bonds link C144-C187, C178-C221, and C279-C365. C147 is a catalytic residue. Catalysis depends on residues H286 and N343.

Belongs to the peptidase C1 family.

It localises to the lysosome. Its function is as follows. Cysteine proteinases 1 and 2 are believed to participate in the breakdown of protein during differentiation of Dictyostelium as a response to starvation. The polypeptide is Cysteine proteinase 2 (cprB) (Dictyostelium discoideum (Social amoeba)).